The sequence spans 83 residues: U5-theraphotoxin-Hs1a 5 (83 aa).

Positions 1–21 are cleaved as a signal peptide; sequence MKTSMFLTLTGLVLLFVVCYA. Residues 22–49 constitute a propeptide that is removed on maturation; the sequence is SESEEKEFPKELPSSIFAADSDFKVEER. Cystine bridges form between cysteine 51–cysteine 63, cysteine 56–cysteine 68, and cysteine 62–cysteine 75.

Belongs to the neurotoxin 10 (Hwtx-1) family. 51 (Hntx-8) subfamily. Hntx-8 sub-subfamily. As to expression, expressed by the venom gland.

It localises to the secreted. Agglutinates erythrocytes. The sequence is that of U5-theraphotoxin-Hs1a 5 from Cyriopagopus schmidti (Chinese bird spider).